A 70-amino-acid polypeptide reads, in one-letter code: Large ribosomal subunit protein bL31 (70 aa).

4 residues coordinate Zn(2+): C17, C19, C37, and C40.

Belongs to the bacterial ribosomal protein bL31 family. Type A subfamily. Part of the 50S ribosomal subunit. The cofactor is Zn(2+).

Its function is as follows. Binds the 23S rRNA. The chain is Large ribosomal subunit protein bL31 from Clostridium acetobutylicum (strain ATCC 824 / DSM 792 / JCM 1419 / IAM 19013 / LMG 5710 / NBRC 13948 / NRRL B-527 / VKM B-1787 / 2291 / W).